The sequence spans 246 residues: MKKPPVPLLQNGLRADGRAPDQMREVQIQVGTVSNADGSAVVSYGATTAVAAVYGPREMHPRHLSLPDRGVMRVRYHMAPFSTKDERKSPTPSRREIEISKVLREALEPAVMLEQYPRSRIDVFIEILQADGSTRVASLTAASLALADAGIYMRDLVVGVSVGLVDGTVVLDLNGLEDNYGEGDMPVGYMPNLRRFTLLQLDGAWTREKFLEALGLAVKGAEYVYQVAREALKNKYMAIAEEIYGR.

It belongs to the RNase PH family. Rrp41 subfamily. Component of the archaeal exosome complex. Forms a hexameric ring-like arrangement composed of 3 Rrp41-Rrp42 heterodimers. The hexameric ring associates with a trimer of Rrp4 and/or Csl4 subunits.

It localises to the cytoplasm. Catalytic component of the exosome, which is a complex involved in RNA degradation. Has 3'-&gt;5' exoribonuclease activity. Can also synthesize heteromeric RNA-tails. The chain is Exosome complex component Rrp41 from Pyrobaculum calidifontis (strain DSM 21063 / JCM 11548 / VA1).